The following is a 297-amino-acid chain: Phosphoribosylaminoimidazole-succinocarboxamide synthase (297 aa).

It belongs to the SAICAR synthetase family.

The enzyme catalyses 5-amino-1-(5-phospho-D-ribosyl)imidazole-4-carboxylate + L-aspartate + ATP = (2S)-2-[5-amino-1-(5-phospho-beta-D-ribosyl)imidazole-4-carboxamido]succinate + ADP + phosphate + 2 H(+). The protein operates within purine metabolism; IMP biosynthesis via de novo pathway; 5-amino-1-(5-phospho-D-ribosyl)imidazole-4-carboxamide from 5-amino-1-(5-phospho-D-ribosyl)imidazole-4-carboxylate: step 1/2. This is Phosphoribosylaminoimidazole-succinocarboxamide synthase from Mycobacterium sp. (strain JLS).